An 865-amino-acid chain; its full sequence is Probable alpha/beta-glucosidase ARB_02101 (865 aa).

Positions 1–21 (MFGRTLALAAVFATTVLSAAA) are cleaved as a signal peptide. Asparagine 101 and asparagine 299 each carry an N-linked (GlcNAc...) asparagine glycan. The active-site Nucleophile is aspartate 428. Residue glutamate 431 is part of the active site. Residue asparagine 515 is glycosylated (N-linked (GlcNAc...) asparagine). The active-site Proton donor is the aspartate 548. Residues asparagine 549, asparagine 585, and asparagine 748 are each glycosylated (N-linked (GlcNAc...) asparagine).

It belongs to the glycosyl hydrolase 31 family.

The protein resides in the secreted. It catalyses the reaction Hydrolysis of terminal, non-reducing (1-&gt;4)-linked alpha-D-glucose residues with release of alpha-D-glucose.. The enzyme catalyses Hydrolysis of terminal, non-reducing beta-D-glucosyl residues with release of beta-D-glucose.. In terms of biological role, glucosidase involved in the degradation of cellulosic biomass. Has both alpha- and beta-glucosidase activity. The sequence is that of Probable alpha/beta-glucosidase ARB_02101 from Arthroderma benhamiae (strain ATCC MYA-4681 / CBS 112371) (Trichophyton mentagrophytes).